The chain runs to 226 residues: Orotidine 5'-phosphate decarboxylase (226 aa).

Residues aspartate 8, lysine 30, 58–67 (DLKLYDIPNT), threonine 117, arginine 177, glutamine 186, glycine 206, and arginine 207 each bind substrate. Lysine 60 (proton donor) is an active-site residue.

This sequence belongs to the OMP decarboxylase family. Type 1 subfamily. As to quaternary structure, homodimer.

It catalyses the reaction orotidine 5'-phosphate + H(+) = UMP + CO2. It participates in pyrimidine metabolism; UMP biosynthesis via de novo pathway; UMP from orotate: step 2/2. Its function is as follows. Catalyzes the decarboxylation of orotidine 5'-monophosphate (OMP) to uridine 5'-monophosphate (UMP). This Campylobacter concisus (strain 13826) protein is Orotidine 5'-phosphate decarboxylase.